We begin with the raw amino-acid sequence, 778 residues long: Ribonucleoside-diphosphate reductase large subunit (778 aa).

Substrate contacts are provided by residues Ser-177, Ser-192–Cys-193, Gly-221, Asn-419–Glu-423, and Pro-613–Ser-617. The cysteines at positions 193 and 439 are disulfide-linked. Asn-419 serves as the catalytic Proton acceptor. Cys-421 functions as the Cysteine radical intermediate in the catalytic mechanism. Glu-423 acts as the Proton acceptor in catalysis.

Belongs to the ribonucleoside diphosphate reductase large chain family. In terms of assembly, heterotetramer composed of a homodimer of the large subunit (R1) and a homodimer of the small subunit (R2). Larger multisubunit protein complex are also active, composed of (R1)n(R2)n.

The enzyme catalyses a 2'-deoxyribonucleoside 5'-diphosphate + [thioredoxin]-disulfide + H2O = a ribonucleoside 5'-diphosphate + [thioredoxin]-dithiol. Its activity is regulated as follows. Under complex allosteric control mediated by deoxynucleoside triphosphates and ATP binding. The type of nucleotide bound at the specificity site determines substrate preference. It seems probable that ATP makes the enzyme reduce CDP and UDP, dGTP favors ADP reduction and dTTP favors GDP reduction. Functionally, ribonucleoside-diphosphate reductase holoenzyme provides the precursors necessary for viral DNA synthesis. Allows virus growth in non-dividing cells. Catalyzes the biosynthesis of deoxyribonucleotides from the corresponding ribonucleotides. This is Ribonucleoside-diphosphate reductase large subunit from Ornithodoros (relapsing fever ticks).